Here is a 477-residue protein sequence, read N- to C-terminus: Ribulose bisphosphate carboxylase large chain (477 aa).

Positions 1–2 (MS) are excised as a propeptide. Residue Pro3 is modified to N-acetylproline. Substrate contacts are provided by Asn123 and Thr173. Lys175 functions as the Proton acceptor in the catalytic mechanism. Lys177 lines the substrate pocket. Positions 201, 203, and 204 each coordinate Mg(2+). At Lys201 the chain carries N6-carboxylysine. The Proton acceptor role is filled by His294. Residues Arg295, His327, and Ser379 each coordinate substrate.

The protein belongs to the RuBisCO large chain family. Type I subfamily. As to quaternary structure, heterohexadecamer of 8 large chains and 8 small chains; disulfide-linked. The disulfide link is formed within the large subunit homodimers. The cofactor is Mg(2+). In terms of processing, the disulfide bond which can form in the large chain dimeric partners within the hexadecamer appears to be associated with oxidative stress and protein turnover.

Its subcellular location is the plastid. It is found in the chloroplast. It catalyses the reaction 2 (2R)-3-phosphoglycerate + 2 H(+) = D-ribulose 1,5-bisphosphate + CO2 + H2O. The catalysed reaction is D-ribulose 1,5-bisphosphate + O2 = 2-phosphoglycolate + (2R)-3-phosphoglycerate + 2 H(+). Its function is as follows. RuBisCO catalyzes two reactions: the carboxylation of D-ribulose 1,5-bisphosphate, the primary event in carbon dioxide fixation, as well as the oxidative fragmentation of the pentose substrate in the photorespiration process. Both reactions occur simultaneously and in competition at the same active site. The protein is Ribulose bisphosphate carboxylase large chain of Avena sativa (Oat).